The chain runs to 295 residues: Acetylglutamate kinase (295 aa).

Residues 66–67, R88, and N193 each bind substrate; that span reads GG.

This sequence belongs to the acetylglutamate kinase family. ArgB subfamily.

The protein localises to the cytoplasm. The enzyme catalyses N-acetyl-L-glutamate + ATP = N-acetyl-L-glutamyl 5-phosphate + ADP. Its pathway is amino-acid biosynthesis; L-arginine biosynthesis; N(2)-acetyl-L-ornithine from L-glutamate: step 2/4. Its function is as follows. Catalyzes the ATP-dependent phosphorylation of N-acetyl-L-glutamate. The sequence is that of Acetylglutamate kinase from Rhizobium etli (strain CIAT 652).